Consider the following 310-residue polypeptide: Ribosomal protein uL3 glutamine methyltransferase (310 aa).

This sequence belongs to the protein N5-glutamine methyltransferase family. PrmB subfamily.

The catalysed reaction is L-glutaminyl-[ribosomal protein uL3] + S-adenosyl-L-methionine = N(5)-methyl-L-glutaminyl-[ribosomal protein uL3] + S-adenosyl-L-homocysteine + H(+). In terms of biological role, methylates large ribosomal subunit protein uL3 on a specific glutamine residue. The chain is Ribosomal protein uL3 glutamine methyltransferase from Aliivibrio fischeri (strain ATCC 700601 / ES114) (Vibrio fischeri).